A 115-amino-acid polypeptide reads, in one-letter code: Large ribosomal subunit protein bL19 (115 aa).

It belongs to the bacterial ribosomal protein bL19 family.

Functionally, this protein is located at the 30S-50S ribosomal subunit interface and may play a role in the structure and function of the aminoacyl-tRNA binding site. This is Large ribosomal subunit protein bL19 from Streptococcus pneumoniae serotype 2 (strain D39 / NCTC 7466).